Reading from the N-terminus, the 875-residue chain is Agglutinin-like protein 4 (875 aa).

A signal peptide spans 1–17 (MLLQFLLLSLCVSVATA). Disulfide bonds link C73–C150, C96–C112, C205–C298, and C227–C256. ALS repeat units lie at residues 365–396 (TTITTSYVGVTTSYSTKTAPIGETATVIVDVP), 401–432 (TTVTSEWTGTITTTTTRTNPTDSIDTVVVQVP), 438–469 (VTTTEYWSQSYATTTTVTAPPGGTDSVIIREP), and 474–502 (VTTTEYWSQSYATTLTITAPPGGTNSVII). An N-linked (GlcNAc...) asparagine glycan is attached at N542. 2 disordered regions span residues 546–580 (THLPSSSSKPVDIPSSDVVTSTNDNSLTSLTGSEN) and 619–837 (TTII…LSQQ). Positions 549–578 (PSSSSKPVDIPSSDVVTSTNDNSLTSLTGS) are enriched in low complexity. N626 carries an N-linked (GlcNAc...) asparagine glycan. The segment covering 627–641 (GSGKSKSGELSSTGS) has biased composition (low complexity). A compositionally biased stretch (polar residues) spans 674-715 (STETQTTNNVPGSPNIPATGTTDIRESTTVSHTVTGNGNTGV). A compositionally biased stretch (low complexity) spans 722–746 (ALTTSTSLTGATNSATNPSHETGVN). Polar residues predominate over residues 755–764 (IVTPPSSATA). N-linked (GlcNAc...) asparagine glycosylation is found at N789 and N811. Composition is skewed to low complexity over residues 789 to 816 (NGSTATTNIQGGNNEPGNQPGTNTTGEP) and 827 to 837 (SISQPTTLSQQ). D852 is lipidated: GPI-anchor amidated aspartate. Residues 853-875 (GSGSIVQHSAWLYVLLTAISIFF) constitute a propeptide, removed in mature form.

Belongs to the ALS family. Post-translationally, N-glycosylated and O-glycosylated.

It localises to the cell membrane. The protein localises to the secreted. The protein resides in the cell wall. In terms of biological role, cell surface adhesion protein which mediates both yeast-to-host tissue adherence and yeast aggregation. Plays an important role in the pathogenesis of C.albicans infections. This is Agglutinin-like protein 4 (ALS4) from Candida albicans (Yeast).